A 132-amino-acid chain; its full sequence is MADNAHYWVLLVYTFVVIALVAGMIGVSHFLGQRHLKRATIEPFESGIVTVGYARFRLPVQFYLIAMFFVIFDLEAAYLYAWATAVHAAGWTGYLVIAVFILALLAALAYLWRAGALEWGPKPRALAIVRRR.

The next 3 membrane-spanning stretches (helical) occupy residues 7-27 (YWVL…MIGV), 62-82 (FYLI…LYAW), and 91-111 (WTGY…LAYL).

Belongs to the complex I subunit 3 family. As to quaternary structure, NDH-1 is composed of 14 different subunits. Subunits NuoA, H, J, K, L, M, N constitute the membrane sector of the complex.

The protein localises to the cell inner membrane. The catalysed reaction is a quinone + NADH + 5 H(+)(in) = a quinol + NAD(+) + 4 H(+)(out). NDH-1 shuttles electrons from NADH, via FMN and iron-sulfur (Fe-S) centers, to quinones in the respiratory chain. The immediate electron acceptor for the enzyme in this species is believed to be ubiquinone. Couples the redox reaction to proton translocation (for every two electrons transferred, four hydrogen ions are translocated across the cytoplasmic membrane), and thus conserves the redox energy in a proton gradient. This is NADH-quinone oxidoreductase subunit A from Acidiphilium cryptum (strain JF-5).